Reading from the N-terminus, the 203-residue chain is MARFRGSITKVSRRLGIALSPKAEKYLERRPYAPGQHGQSRRGKVSEYALQLREKQKMKYLYGILEKQFRNYYKKAVAQRGVTGDNLVKMLERRLDNVVYRCGFSPSRAGARQLVTHGHMLVNGKKVNIPSFLVSPGDQIEFRQKSRNLDAVADSLNKVPDSRIPEWIQVDKANRKAVFLAIPEREAVQEPFNEQLVVELYSK.

An S4 RNA-binding domain is found at 93–154 (RRLDNVVYRC…KSRNLDAVAD (62 aa)).

Belongs to the universal ribosomal protein uS4 family. In terms of assembly, part of the 30S ribosomal subunit. Contacts protein S5. The interaction surface between S4 and S5 is involved in control of translational fidelity.

Functionally, one of the primary rRNA binding proteins, it binds directly to 16S rRNA where it nucleates assembly of the body of the 30S subunit. With S5 and S12 plays an important role in translational accuracy. The chain is Small ribosomal subunit protein uS4 from Chlorobaculum tepidum (strain ATCC 49652 / DSM 12025 / NBRC 103806 / TLS) (Chlorobium tepidum).